A 457-amino-acid chain; its full sequence is Probable ubiquitin carboxyl-terminal hydrolase 16 (457 aa).

Positions 34 to 97 are disordered; that stretch reads VSSPSVPEGT…DGANDFVDED (64 aa). A compositionally biased stretch (polar residues) spans 45–67; sequence TVLNNPKQSTVSRKSFSAPTSPT. Ser61 carries the phosphoserine modification. Thr64 is modified (phosphothreonine). Ser65 is modified (phosphoserine). One can recognise a USP domain in the interval 125–429; sequence PGLVNLGNTC…QAYILQYKRK (305 aa). Residue Cys134 is the Nucleophile of the active site. His388 serves as the catalytic Proton acceptor. The tract at residues 434-457 is disordered; that stretch reads SKHKLNTENTVTKTSNKKRRKISF. Residues 448–457 are compositionally biased toward basic residues; it reads SNKKRRKISF.

It belongs to the peptidase C19 family.

The catalysed reaction is Thiol-dependent hydrolysis of ester, thioester, amide, peptide and isopeptide bonds formed by the C-terminal Gly of ubiquitin (a 76-residue protein attached to proteins as an intracellular targeting signal).. This Schizosaccharomyces pombe (strain 972 / ATCC 24843) (Fission yeast) protein is Probable ubiquitin carboxyl-terminal hydrolase 16 (ubp16).